Reading from the N-terminus, the 393-residue chain is Prokineticin receptor 1 (393 aa).

The Extracellular portion of the chain corresponds to 1–63; that stretch reads MEITMGVMDE…NSRTFFAAKI (63 aa). 3 N-linked (GlcNAc...) asparagine glycosylation sites follow: Asn-11, Asn-14, and Asn-36. The chain crosses the membrane as a helical span at residues 64 to 84; that stretch reads VIGMALVGIMLVCGIGNFIFI. The Cytoplasmic portion of the chain corresponds to 85 to 98; that stretch reads AALARYKKLRNLTN. The chain crosses the membrane as a helical span at residues 99-119; that stretch reads LLIANLAISDFLVAIVCCPFE. Topologically, residues 120 to 145 are extracellular; sequence MDYYVVRQLSWEHGHVLCASVNYLRT. Cys-137 and Cys-217 are disulfide-bonded. A helical transmembrane segment spans residues 146–166; sequence VSLYVSTNALLAIAIDRYLAI. The Cytoplasmic segment spans residues 167 to 179; the sequence is VHPLRPRMKYQTA. A helical transmembrane segment spans residues 180 to 200; the sequence is TGLIALVWVVSILVAIPSAYF. Over 201–232 the chain is Extracellular; that stretch reads TTETVLVIVKSQEKIFCGQIWPVDQQIYYKSY. Residues 233 to 253 traverse the membrane as a helical segment; the sequence is FLFIFGIEFVGPVVTMTLCYA. Over 254-282 the chain is Cytoplasmic; sequence RISRELWFKAVPGFQTEQIRKRLRCRRKT. A helical membrane pass occupies residues 283–303; that stretch reads VLVLMCILTAYVLCWAPFYGF. At 304 to 322 the chain is on the extracellular side; the sequence is AIVRDFFPTVFVKEKHYLT. Residues 323-343 traverse the membrane as a helical segment; the sequence is AFYVVECIAMSNSMINTVCFV. Residues 344 to 393 are Cytoplasmic-facing; that stretch reads TVKNNTIKYFKKIMLLHWKASYNGSKSSGDLDLKTTGVPATEEVDCIGLK.

The protein belongs to the G-protein coupled receptor 1 family.

It is found in the cell membrane. Receptor for prokineticin 1. Exclusively coupled to the G(q) subclass of heteromeric G proteins. Activation leads to mobilization of calcium, stimulation of phosphoinositide turnover and activation of p44/p42 mitogen-activated protein kinase. May play a role during early pregnancy. This Bos taurus (Bovine) protein is Prokineticin receptor 1 (PROKR1).